Here is a 150-residue protein sequence, read N- to C-terminus: Large ribosomal subunit protein bL9 (150 aa).

It belongs to the bacterial ribosomal protein bL9 family.

Its function is as follows. Binds to the 23S rRNA. The sequence is that of Large ribosomal subunit protein bL9 from Neisseria meningitidis serogroup B (strain ATCC BAA-335 / MC58).